Reading from the N-terminus, the 156-residue chain is tRNA (cytidine(34)-2'-O)-methyltransferase (156 aa).

G102, L124, and S132 together coordinate S-adenosyl-L-methionine.

This sequence belongs to the class IV-like SAM-binding methyltransferase superfamily. RNA methyltransferase TrmH family. TrmL subfamily. In terms of assembly, homodimer.

It is found in the cytoplasm. It catalyses the reaction cytidine(34) in tRNA + S-adenosyl-L-methionine = 2'-O-methylcytidine(34) in tRNA + S-adenosyl-L-homocysteine + H(+). The enzyme catalyses 5-carboxymethylaminomethyluridine(34) in tRNA(Leu) + S-adenosyl-L-methionine = 5-carboxymethylaminomethyl-2'-O-methyluridine(34) in tRNA(Leu) + S-adenosyl-L-homocysteine + H(+). Functionally, methylates the ribose at the nucleotide 34 wobble position in the two leucyl isoacceptors tRNA(Leu)(CmAA) and tRNA(Leu)(cmnm5UmAA). Catalyzes the methyl transfer from S-adenosyl-L-methionine to the 2'-OH of the wobble nucleotide. The chain is tRNA (cytidine(34)-2'-O)-methyltransferase from Burkholderia pseudomallei (strain 1106a).